The sequence spans 424 residues: Dihydroorotase (424 aa).

Positions 58 and 60 each coordinate Zn(2+). Residues 60-62, N92, and N276 each bind substrate; that span reads HLR. D303 is a Zn(2+) binding site. D303 is an active-site residue. Substrate-binding positions include H307 and 321–322; that span reads FG.

This sequence belongs to the metallo-dependent hydrolases superfamily. DHOase family. Class I DHOase subfamily. It depends on Zn(2+) as a cofactor.

The catalysed reaction is (S)-dihydroorotate + H2O = N-carbamoyl-L-aspartate + H(+). It functions in the pathway pyrimidine metabolism; UMP biosynthesis via de novo pathway; (S)-dihydroorotate from bicarbonate: step 3/3. Its function is as follows. Catalyzes the reversible cyclization of carbamoyl aspartate to dihydroorotate. The sequence is that of Dihydroorotase from Staphylococcus aureus (strain COL).